Reading from the N-terminus, the 450-residue chain is Glutamate-1-semialdehyde 2,1-aminomutase (450 aa).

Lys-262 carries the post-translational modification N6-(pyridoxal phosphate)lysine.

Belongs to the class-III pyridoxal-phosphate-dependent aminotransferase family. HemL subfamily. As to quaternary structure, homodimer. Requires pyridoxal 5'-phosphate as cofactor.

Its subcellular location is the cytoplasm. The catalysed reaction is (S)-4-amino-5-oxopentanoate = 5-aminolevulinate. Its pathway is porphyrin-containing compound metabolism; protoporphyrin-IX biosynthesis; 5-aminolevulinate from L-glutamyl-tRNA(Glu): step 2/2. This Campylobacter hominis (strain ATCC BAA-381 / DSM 21671 / CCUG 45161 / LMG 19568 / NCTC 13146 / CH001A) protein is Glutamate-1-semialdehyde 2,1-aminomutase.